The primary structure comprises 154 residues: Putative nickel-responsive regulator (154 aa).

4 residues coordinate Ni(2+): His-95, His-106, His-108, and Cys-114.

The protein belongs to the transcriptional regulatory CopG/NikR family. The cofactor is Ni(2+).

Functionally, transcriptional regulator. This Caldanaerobacter subterraneus subsp. tengcongensis (strain DSM 15242 / JCM 11007 / NBRC 100824 / MB4) (Thermoanaerobacter tengcongensis) protein is Putative nickel-responsive regulator.